We begin with the raw amino-acid sequence, 208 residues long: Tektin bundle-interacting protein 1 (208 aa).

In terms of assembly, microtubule inner protein component of sperm flagellar doublet microtubules. Expressed in trachea multiciliated cells.

It is found in the cytoplasm. The protein resides in the cytoskeleton. The protein localises to the cilium axoneme. Its subcellular location is the flagellum axoneme. Its function is as follows. Microtubule inner protein (MIP) part of the dynein-decorated doublet microtubules (DMTs) in cilia axoneme, which is required for motile cilia beating. Located at the center of the tektin bundle where may function to recruit tektins or stabilize the bundle. In Bos taurus (Bovine), this protein is Tektin bundle-interacting protein 1 (TEKTIP1).